Reading from the N-terminus, the 503-residue chain is ATP synthase subunit alpha (503 aa).

170–177 is an ATP binding site; it reads GDKQTGKT.

Belongs to the ATPase alpha/beta chains family. In terms of assembly, F-type ATPases have 2 components, CF(1) - the catalytic core - and CF(0) - the membrane proton channel. CF(1) has five subunits: alpha(3), beta(3), gamma(1), delta(1), epsilon(1). CF(0) has three main subunits: a(1), b(2) and c(9-12). The alpha and beta chains form an alternating ring which encloses part of the gamma chain. CF(1) is attached to CF(0) by a central stalk formed by the gamma and epsilon chains, while a peripheral stalk is formed by the delta and b chains.

It is found in the cell inner membrane. The catalysed reaction is ATP + H2O + 4 H(+)(in) = ADP + phosphate + 5 H(+)(out). Functionally, produces ATP from ADP in the presence of a proton gradient across the membrane. The alpha chain is a regulatory subunit. This is ATP synthase subunit alpha from Helicobacter pylori (strain Shi470).